Here is a 364-residue protein sequence, read N- to C-terminus: Chorismate synthase (364 aa).

The NADP(+) site is built by arginine 48 and arginine 54. FMN is bound by residues 125-127 (RSS), glycine 282, 297-301 (KPPAS), and arginine 323.

The protein belongs to the chorismate synthase family. Homotetramer. FMNH2 is required as a cofactor.

It catalyses the reaction 5-O-(1-carboxyvinyl)-3-phosphoshikimate = chorismate + phosphate. It functions in the pathway metabolic intermediate biosynthesis; chorismate biosynthesis; chorismate from D-erythrose 4-phosphate and phosphoenolpyruvate: step 7/7. In terms of biological role, catalyzes the anti-1,4-elimination of the C-3 phosphate and the C-6 proR hydrogen from 5-enolpyruvylshikimate-3-phosphate (EPSP) to yield chorismate, which is the branch point compound that serves as the starting substrate for the three terminal pathways of aromatic amino acid biosynthesis. This reaction introduces a second double bond into the aromatic ring system. The protein is Chorismate synthase of Chloroflexus aurantiacus (strain ATCC 29366 / DSM 635 / J-10-fl).